The sequence spans 414 residues: Esterase FrsA (414 aa).

It belongs to the FrsA family.

It catalyses the reaction a carboxylic ester + H2O = an alcohol + a carboxylate + H(+). In terms of biological role, catalyzes the hydrolysis of esters. This Salmonella agona (strain SL483) protein is Esterase FrsA.